A 247-amino-acid chain; its full sequence is HTH-type transcriptional regulator SarU (247 aa).

2 DNA-binding regions (H-T-H motif) span residues 53 to 76 (LKEI…SLSK) and 178 to 201 (LKDL…RLNN).

It belongs to the SarA family.

Its subcellular location is the cytoplasm. In terms of biological role, positive regulator of RNAII and RNAIII in a cell density-dependent manner. It can contribute to the expression of virulence genes controlled by agr. May also regulate target genes via an agr-independent pathway. The polypeptide is HTH-type transcriptional regulator SarU (sarU) (Staphylococcus aureus (strain NCTC 8325 / PS 47)).